The chain runs to 191 residues: NF-kappa-B inhibitor-interacting Ras-like protein 2 (191 aa).

Residues 1 to 191 (MGKSCKVVVC…KNKGSGSLDG (191 aa)) form a small GTPase-like region. 11–18 (GQASVGKT) lines the GTP pocket. The Effector region motif lies at 35–43 (MIETQEDIY). GTP contacts are provided by residues 61-65 (DTRGL) and 120-123 (NKCD). Residues 169–191 (TQPQSKSAFPLSRKNKGSGSLDG) are disordered.

The protein belongs to the small GTPase superfamily. Ras family. KappaB-Ras subfamily. As to quaternary structure, interacts with both NF-kappa-B inhibitor alpha (NFKBIA) and beta (NFKBIB) in vitro. However, it probably only interacts with NFKBIB in vivo. Interacts with GFOD1.

The protein localises to the cytoplasm. Atypical Ras-like protein that acts as a potent regulator of NF-kappa-B activity by preventing the degradation of NF-kappa-B inhibitor beta (NFKBIB) by most signals, explaining why NFKBIB is more resistant to degradation. May act by blocking phosphorylation of NFKBIB and nuclear localization of p65/RELA NF-kappa-B subunit. It is unclear whether it acts as a GTPase. Both GTP- and GDP-bound forms block phosphorylation of NFKBIB. The protein is NF-kappa-B inhibitor-interacting Ras-like protein 2 (Nkiras2) of Mus musculus (Mouse).